Here is a 195-residue protein sequence, read N- to C-terminus: Protein Nef (195 aa).

Gly-2 carries the N-myristoyl glycine; by host lipid modification. The segment at 2–53 is N-terminal; associates with the host plasma membrane; the sequence is GNIFGRWPGARKAIEDLHNTSSEPVGQASQDLQNKGGLTTNTLGTSADVLEY. The tract at residues 7–22 is necessary for MHC-I internalization; that stretch reads RWPGARKAIEDLHNTS. Residues 59 to 61 are acidic; the sequence is EEE. An SH3-binding region spans residues 65-74; that stretch reads PVRPAVPMRP. The segment at 65 to 74 is SH3-binding; interaction with Src family tyrosine kinases; the sequence is PVRPAVPMRP. The short motif at 68–71 is the PxxP element; the sequence is PAVP. Residues 104–120 are mediates dimerization; the sequence is AILDTWMYNTQGVFPDW. The tract at residues 144–171 is binding to ATP6V1H; sequence VDPPEDDEKNILLHPACSHGTTDPDGET. The Di-leucine internalization motif; necessary for CD4 internalization motif lies at 155–156; it reads LL.

The protein belongs to the lentivirus primate group Nef protein family. In terms of assembly, homodimer.

It is found in the host cell membrane. It localises to the host cytoplasm. The protein resides in the host perinuclear region. Its subcellular location is the virion. The protein localises to the secreted. Factor of infectivity and pathogenicity, required for optimal virus replication. Alters numerous pathways of T-lymphocyte function and down-regulates immunity surface molecules in order to evade host defense and increase viral infectivity. Alters the functionality of other immunity cells, like dendritic cells, monocytes/macrophages and NK cells. One of the earliest and most abundantly expressed viral proteins. In terms of biological role, in infected CD4(+) T-lymphocytes, down-regulates the surface MHC-I, mature MHC-II, CD4, CD28 and probably other immunity surface molecules. In consequence infected cells are masked for immune recognition by cytotoxic T-lymphocytes. Decreasing the number of immune receptors also prevents reinfection by more HIV particles (superinfection). Its function is as follows. Bypasses host T-cell signaling by inducing a transcriptional program nearly identical to that of anti-CD3 cell activation. Interaction with TCR-zeta chain up-regulates the Fas ligand (FasL). Increasing surface FasL molecules and decreasing surface MHC-I molecules on infected CD4(+) cells send attacking cytotoxic CD8+ T-lymphocytes into apoptosis. Functionally, plays a role in optimizing the host cell environment for viral replication without causing cell death by apoptosis. Protects the infected cells from apoptosis in order to keep them alive until the next virus generation is ready to strike. In Pan troglodytes (Chimpanzee), this protein is Protein Nef.